A 61-amino-acid polypeptide reads, in one-letter code: UPF0391 membrane protein Bpro_0066 (61 aa).

A run of 2 helical transmembrane segments spans residues A5 to A25 and I33 to V53.

The protein belongs to the UPF0391 family.

The protein resides in the cell membrane. The polypeptide is UPF0391 membrane protein Bpro_0066 (Polaromonas sp. (strain JS666 / ATCC BAA-500)).